The following is a 537-amino-acid chain: CTP synthase (537 aa).

Residues Met1 to Leu268 form an amidoligase domain region. CTP is bound at residue Ser14. Ser14 is a UTP binding site. Residue Ser15–Leu20 participates in ATP binding. Tyr55 contacts L-glutamine. Asp72 is an ATP binding site. Residues Asp72 and Glu142 each contribute to the Mg(2+) site. CTP contacts are provided by residues Asp149 to Glu151, Lys188 to Gln193, and Lys224. UTP is bound by residues Lys188–Gln193 and Lys224. A Glutamine amidotransferase type-1 domain is found at Arg294–Asn533. Residue Gly353 participates in L-glutamine binding. Cys380 serves as the catalytic Nucleophile; for glutamine hydrolysis. L-glutamine contacts are provided by residues Leu381–Gln384, Glu404, and Arg461. Residues His506 and Glu508 contribute to the active site.

It belongs to the CTP synthase family. Homotetramer.

It carries out the reaction UTP + L-glutamine + ATP + H2O = CTP + L-glutamate + ADP + phosphate + 2 H(+). The enzyme catalyses L-glutamine + H2O = L-glutamate + NH4(+). The catalysed reaction is UTP + NH4(+) + ATP = CTP + ADP + phosphate + 2 H(+). Its pathway is pyrimidine metabolism; CTP biosynthesis via de novo pathway; CTP from UDP: step 2/2. Its activity is regulated as follows. Allosterically activated by GTP, when glutamine is the substrate; GTP has no effect on the reaction when ammonia is the substrate. The allosteric effector GTP functions by stabilizing the protein conformation that binds the tetrahedral intermediate(s) formed during glutamine hydrolysis. Inhibited by the product CTP, via allosteric rather than competitive inhibition. In terms of biological role, catalyzes the ATP-dependent amination of UTP to CTP with either L-glutamine or ammonia as the source of nitrogen. Regulates intracellular CTP levels through interactions with the four ribonucleotide triphosphates. This is CTP synthase from Chlamydia abortus (strain DSM 27085 / S26/3) (Chlamydophila abortus).